The following is a 411-amino-acid chain: MRVIVVNSGSSSIKYEVFALDDCSTLVDGLLERIGTRNARFKRRWLTDSGHWEEMEETRPIADHHEGFRFLLDAAVRYPTTRVAPGAFFGFGHRVVHGGEVFHEPVIVDDEVVRRIKDLIPLAPLHNPANVAAIEALRLIRPDVPNVAVFDTAFHQSMPPKAFLYALPHELYREHHVRRYGFHGTSHRYVAGEAARHLGLPEDYANLITLHLGNGASATAVQGGRSIDTSMGLTPLEGLIMGTRCGDLDPAVHFYISRKTGRSSEELEAMMNKESGLKGICGTNDMREIQRRSADGDARAQLAFEMFCYRIRKYIGSYSAALGRVDAIVFTGGIGENSAPVRRECCDGLRNLGVVLDHRRNEEDWSGLHEIQREDSPVKILVIPTDEEREIARQTIQTIRRAGVAGGARNQ.

Asn-7 is a Mg(2+) binding site. Position 14 (Lys-14) interacts with ATP. Arg-94 contacts substrate. Asp-151 acts as the Proton donor/acceptor in catalysis. ATP is bound by residues 211 to 215, 285 to 287, and 333 to 337; these read HLGNG, DMR, and GIGEN. Glu-387 is a binding site for Mg(2+).

This sequence belongs to the acetokinase family. In terms of assembly, homodimer. It depends on Mg(2+) as a cofactor. Mn(2+) is required as a cofactor.

Its subcellular location is the cytoplasm. The catalysed reaction is acetate + ATP = acetyl phosphate + ADP. The protein operates within metabolic intermediate biosynthesis; acetyl-CoA biosynthesis; acetyl-CoA from acetate: step 1/2. Its function is as follows. Catalyzes the formation of acetyl phosphate from acetate and ATP. Can also catalyze the reverse reaction. This Syntrophobacter fumaroxidans (strain DSM 10017 / MPOB) protein is Acetate kinase.